We begin with the raw amino-acid sequence, 395 residues long: S-adenosylmethionine synthase (395 aa).

An ATP-binding site is contributed by histidine 14. Position 16 (aspartate 16) interacts with Mg(2+). A K(+)-binding site is contributed by glutamate 42. Glutamate 55 and glutamine 98 together coordinate L-methionine. Residues 98–108 (QSPDIAMGVNK) are flexible loop. ATP contacts are provided by residues 174–176 (DGK), 240–241 (RF), aspartate 249, 255–256 (RK), alanine 272, and lysine 276. Aspartate 249 provides a ligand contact to L-methionine. Residue lysine 280 participates in L-methionine binding.

It belongs to the AdoMet synthase family. Homotetramer; dimer of dimers. Mg(2+) serves as cofactor. K(+) is required as a cofactor.

It localises to the cytoplasm. It catalyses the reaction L-methionine + ATP + H2O = S-adenosyl-L-methionine + phosphate + diphosphate. It functions in the pathway amino-acid biosynthesis; S-adenosyl-L-methionine biosynthesis; S-adenosyl-L-methionine from L-methionine: step 1/1. In terms of biological role, catalyzes the formation of S-adenosylmethionine (AdoMet) from methionine and ATP. The overall synthetic reaction is composed of two sequential steps, AdoMet formation and the subsequent tripolyphosphate hydrolysis which occurs prior to release of AdoMet from the enzyme. This is S-adenosylmethionine synthase from Caldanaerobacter subterraneus subsp. tengcongensis (strain DSM 15242 / JCM 11007 / NBRC 100824 / MB4) (Thermoanaerobacter tengcongensis).